A 292-amino-acid chain; its full sequence is ATP synthase gamma chain (292 aa).

This sequence belongs to the ATPase gamma chain family. As to quaternary structure, F-type ATPases have 2 components, CF(1) - the catalytic core - and CF(0) - the membrane proton channel. CF(1) has five subunits: alpha(3), beta(3), gamma(1), delta(1), epsilon(1). CF(0) has three main subunits: a, b and c.

The protein localises to the cell inner membrane. In terms of biological role, produces ATP from ADP in the presence of a proton gradient across the membrane. The gamma chain is believed to be important in regulating ATPase activity and the flow of protons through the CF(0) complex. The protein is ATP synthase gamma chain of Brucella anthropi (strain ATCC 49188 / DSM 6882 / CCUG 24695 / JCM 21032 / LMG 3331 / NBRC 15819 / NCTC 12168 / Alc 37) (Ochrobactrum anthropi).